We begin with the raw amino-acid sequence, 94 residues long: Co-chaperonin GroES (94 aa).

Belongs to the GroES chaperonin family. In terms of assembly, heptamer of 7 subunits arranged in a ring. Interacts with the chaperonin GroEL.

It is found in the cytoplasm. Functionally, together with the chaperonin GroEL, plays an essential role in assisting protein folding. The GroEL-GroES system forms a nano-cage that allows encapsulation of the non-native substrate proteins and provides a physical environment optimized to promote and accelerate protein folding. GroES binds to the apical surface of the GroEL ring, thereby capping the opening of the GroEL channel. The polypeptide is Co-chaperonin GroES (Exiguobacterium sibiricum (strain DSM 17290 / CCUG 55495 / CIP 109462 / JCM 13490 / 255-15)).